Here is a 112-residue protein sequence, read N- to C-terminus: uncharacterized protein (112 aa).

Coiled coils occupy residues 15-53 (AEKK…FFKF) and 86-103 (LDYE…TERK).

This is an uncharacterized protein from Aquifex aeolicus (strain VF5).